The sequence spans 2223 residues: Protein Ycf2 (2223 aa).

Position 1576 to 1583 (1576 to 1583 (GSIGTGRS)) interacts with ATP.

This sequence belongs to the Ycf2 family.

It localises to the plastid. Its subcellular location is the chloroplast stroma. In terms of biological role, probable ATPase of unknown function. Its presence in a non-photosynthetic plant (Epifagus virginiana) and experiments in tobacco indicate that it has an essential function which is probably not related to photosynthesis. The protein is Protein Ycf2 of Silene latifolia (White campion).